The primary structure comprises 455 residues: Ammonium transporter Rh type B (455 aa).

Residues 1–10 (MARVPRHRRL) lie on the Cytoplasmic side of the membrane. Residues 11 to 31 (VLPLLCLLFQGATALLFAIFV) form a helical membrane-spanning segment. Over 32–58 (RYNHETDAALWHWGNHSNVDNEFYFRY) the chain is Extracellular. Residue N46 is glycosylated (N-linked (GlcNAc...) asparagine). The helical transmembrane segment at 59 to 79 (PSFQDVHVMVFVGFGFLMVFL) threads the bilayer. Over 80–83 (QRYG) the chain is Cytoplasmic. The helical transmembrane segment at 84-104 (FSSVGFTFLVASLTLQWATLL) threads the bilayer. Residues 105 to 121 (QGFLHSFHGGHIHVGVE) lie on the Extracellular side of the membrane. The chain crosses the membrane as a helical span at residues 122-142 (SLINADFCAGAVLISFGAVLG). The Cytoplasmic portion of the chain corresponds to 143-146 (KTGP). Residues 147–167 (AQLLLMALLEAVLFSVNEFIL) traverse the membrane as a helical segment. Topologically, residues 168–175 (LSLLGVRD) are extracellular. A helical transmembrane segment spans residues 176-198 (AGGSMTIHTFGAYFGLFLSWVLY). Over 199 to 216 (RSQLEKSRHRQSSVYNSD) the chain is Cytoplasmic. A helical transmembrane segment spans residues 217 to 237 (LFAMIGTIFLWVFWPSFNSAP). The Extracellular portion of the chain corresponds to 238 to 248 (TALGDGQHRTV). Residues 249–269 (VNTYYSLTASTLSTFALSALV) form a helical membrane-spanning segment. The Cytoplasmic segment spans residues 270-279 (SGDGRLDMVH). Residues 280–300 (VQNAALAGGVVVGTSSEMMLT) traverse the membrane as a helical segment. P301 is a topological domain (extracellular). The helical transmembrane segment at 302-322 (FGALAAGFLAGTVSTLGYKFF) threads the bilayer. Residues 323–343 (TPILESRFKLQDTCGVHNLHG) are Cytoplasmic-facing. A helical membrane pass occupies residues 344–364 (MPGVLGAILGVVVAALATHEA). The Extracellular segment spans residues 365-390 (YGDGLQSVFPLIAKGQRSATSQAVYQ). A helical transmembrane segment spans residues 391–411 (LFGMFVTLVFASVGGSLGGLL). Residues 412–455 (LRLPFLDSPPDSQCFEDQVYWEVPGEQETETQRPLRGGESDTRA) lie on the Cytoplasmic side of the membrane. An interaction with ANK3 region spans residues 413–421 (RLPFLDSPP). The interval 434-455 (VPGEQETETQRPLRGGESDTRA) is disordered. Basic and acidic residues predominate over residues 441 to 455 (ETQRPLRGGESDTRA).

This sequence belongs to the ammonium transporter (TC 2.A.49) family. Rh subfamily. As to quaternary structure, interacts (via C-terminus) with ANK2 and ANK3; required for targeting to the basolateral membrane. Post-translationally, N-glycosylated. Expressed in kidney by connecting segments and collecting tubules. Also expressed in liver by perivenous hepatocytes. Expressed in the forestomach and the fundus of the stomach. Expressed in duodenum, jejunum, ileum and colon at the level of villous (at protein level). Specifically expressed in kidney where it is restricted to the epithelial linings of the convoluted tubules and the loop of Henle. Also detected in ovary. Expressed by hepatocytes and dermal hair follicles and papillae.

It localises to the cell membrane. The protein localises to the basolateral cell membrane. It carries out the reaction NH4(+)(in) = NH4(+)(out). The enzyme catalyses methylamine(out) = methylamine(in). The catalysed reaction is CO2(out) = CO2(in). Its activity is regulated as follows. Inhibited by amiloride. Its function is as follows. Ammonium transporter involved in the maintenance of acid-base homeostasis. Transports ammonium and its related derivative methylammonium across the basolateral plasma membrane of epithelial cells likely contributing to renal transepithelial ammonia transport and ammonia metabolism. May transport either NH4(+) or NH3 ammonia species predominantly mediating an electrogenic NH4(+) transport. May act as a CO2 channel providing for renal acid secretion. This Mus musculus (Mouse) protein is Ammonium transporter Rh type B (Rhbg).